We begin with the raw amino-acid sequence, 403 residues long: MTKNSTECSPANQTGLERVLRSPAIAGLVLLVSMLVAFFWVNSPFADSYEAIHHAPAAISIGSFELAKPLILWINEGLMIVFFFLIGLEIKREVFEGQLSSPKQIALPAFAALGGMLVPAAIFLAFNNGSEEYVRGWAVPAATDIVLALALLAMLGSRVPIALKVFLTALAIFDDFGTLVIIALAYSEGLSLPSLLMAALGTLALIVLNRLRVASLTAYVLVGVFVWVSVLESGVHSTLAGVIIAWCIPMRVSGREFLHKIEHDLSPWVALLIVPLFAFFNAGIDLGGVDFETFFGPLGLGIILGLFVGKQVGVMLGVGLAVVLRIGARPIEVSWGHLYGAALLSGVGFTMSLFVAGLAFEQPGAVLTVNLAVVVGSVLSATGGLVVLARSYQTSPSLANAPD.

12 helical membrane-spanning segments follow: residues isoleucine 25 to phenylalanine 45, leucine 70 to isoleucine 90, isoleucine 105 to alanine 125, glycine 136 to glycine 156, valine 165 to alanine 185, glutamate 188 to leucine 208, valine 213 to serine 233, glycine 234 to glycine 254, valine 269 to valine 289, isoleucine 302 to valine 322, glycine 340 to phenylalanine 360, and valine 369 to alanine 389.

This sequence belongs to the NhaA Na(+)/H(+) (TC 2.A.33) antiporter family.

It localises to the cell inner membrane. It carries out the reaction Na(+)(in) + 2 H(+)(out) = Na(+)(out) + 2 H(+)(in). Its function is as follows. Na(+)/H(+) antiporter that extrudes sodium in exchange for external protons. The protein is Na(+)/H(+) antiporter NhaA of Maricaulis maris (strain MCS10) (Caulobacter maris).